Reading from the N-terminus, the 224-residue chain is Triosephosphate isomerase (224 aa).

Substrate is bound at residue 9–11 (NFK). Residue H93 is the Electrophile of the active site. The Proton acceptor role is filled by E141. Residues I146, G181, and 202-203 (AS) contribute to the substrate site.

This sequence belongs to the triosephosphate isomerase family. In terms of assembly, homotetramer; dimer of dimers.

The protein resides in the cytoplasm. The enzyme catalyses D-glyceraldehyde 3-phosphate = dihydroxyacetone phosphate. It functions in the pathway carbohydrate biosynthesis; gluconeogenesis. It participates in carbohydrate degradation; glycolysis; D-glyceraldehyde 3-phosphate from glycerone phosphate: step 1/1. Functionally, involved in the gluconeogenesis. Catalyzes stereospecifically the conversion of dihydroxyacetone phosphate (DHAP) to D-glyceraldehyde-3-phosphate (G3P). The polypeptide is Triosephosphate isomerase (Pyrobaculum arsenaticum (strain DSM 13514 / JCM 11321 / PZ6)).